The following is a 319-amino-acid chain: Phenoxybenzoate dioxygenase subunit beta (319 aa).

Residues 7-109 (MAPVSLRIHA…DGPSNHFALD (103 aa)) form the FAD-binding FR-type domain. 113–223 (PHAVFIAGGI…PARVHLEYFA (111 aa)) lines the NAD(+) pocket. Positions 234–319 (FVVHLARSGR…SKTAELTLDL (86 aa)) constitute a 2Fe-2S ferredoxin-type domain. 4 residues coordinate [2Fe-2S] cluster: Cys268, Cys273, Cys276, and Cys306.

This sequence belongs to the PDR/VanB family. In terms of assembly, this dioxygenase system consists of two proteins: the alpha subunit (PobA) and a subunit (PobB) that acts as a ferredoxin and a ferredoxin reductase. Requires FMN as cofactor.

Its pathway is aromatic compound metabolism; carboxydiphenyl ether degradation. Functionally, degrades exclusively diarylether compounds having carboxyl groups in the 3- or 4-position. Yields a hemiacetal that spontaneously hydrolyzes to phenol and protocatechuate. This is Phenoxybenzoate dioxygenase subunit beta (pobB) from Ectopseudomonas oleovorans (Pseudomonas oleovorans).